The primary structure comprises 109 residues: Flagellar hook-basal body complex protein FliE (109 aa).

The protein belongs to the FliE family.

It is found in the bacterial flagellum basal body. The polypeptide is Flagellar hook-basal body complex protein FliE (Pseudomonas paraeruginosa (strain DSM 24068 / PA7) (Pseudomonas aeruginosa (strain PA7))).